The following is a 175-amino-acid chain: DDB1- and CUL4-associated factor 16 (175 aa).

Residues 1–42 (MGPRNPSPDPLSESESEEEENTNYLNESSGEEWDSSEEEDPV) form a disordered region. 2 stretches are compositionally biased toward acidic residues: residues 12–21 (SESESEEEEN) and 29–41 (SGEE…EEDP). N6-acetyllysine is present on Lys-61.

In terms of assembly, interacts with DDB1 and CUL4A.

Its subcellular location is the nucleus. The protein operates within protein modification; protein ubiquitination. In terms of biological role, functions as a substrate recognition component for CUL4-DDB1 E3 ubiquitin-protein ligase complex, which mediates ubiquitination and proteasome-dependent degradation of nuclear proteins. This is DDB1- and CUL4-associated factor 16 (DCAF16) from Bos taurus (Bovine).